Here is a 196-residue protein sequence, read N- to C-terminus: Molybdenum cofactor guanylyltransferase (196 aa).

Residues 10–12 (LAG), lysine 23, asparagine 51, aspartate 69, and aspartate 99 contribute to the GTP site. Position 99 (aspartate 99) interacts with Mg(2+).

The protein belongs to the MobA family. Monomer. Requires Mg(2+) as cofactor.

It is found in the cytoplasm. The catalysed reaction is Mo-molybdopterin + GTP + H(+) = Mo-molybdopterin guanine dinucleotide + diphosphate. Its function is as follows. Transfers a GMP moiety from GTP to Mo-molybdopterin (Mo-MPT) cofactor (Moco or molybdenum cofactor) to form Mo-molybdopterin guanine dinucleotide (Mo-MGD) cofactor. The chain is Molybdenum cofactor guanylyltransferase from Shewanella sp. (strain W3-18-1).